Here is a 246-residue protein sequence, read N- to C-terminus: tRNA (guanine-N(1)-)-methyltransferase (246 aa).

Residues glycine 114 and 134-139 contribute to the S-adenosyl-L-methionine site; that span reads IGDYIL.

Belongs to the RNA methyltransferase TrmD family. Homodimer.

The protein resides in the cytoplasm. It catalyses the reaction guanosine(37) in tRNA + S-adenosyl-L-methionine = N(1)-methylguanosine(37) in tRNA + S-adenosyl-L-homocysteine + H(+). Functionally, specifically methylates guanosine-37 in various tRNAs. In Coxiella burnetii (strain RSA 493 / Nine Mile phase I), this protein is tRNA (guanine-N(1)-)-methyltransferase.